The following is a 983-amino-acid chain: Receptor-type tyrosine-protein phosphatase-like N (983 aa).

The first 40 residues, 1–40 (MRRPRRPGGPAGCGGSEGSGGLRLLVCLLLLSGRPGGCSA), serve as a signal peptide directing secretion. The tract at residues 41–137 (ISAHGCLFDR…HPRDRSGSVP (97 aa)) is RESP18 homology domain. Over 41-579 (ISAHGCLFDR…RQAHGISPMR (539 aa)) the chain is Lumenal. A disulfide bridge links Cys59 with Cys68. Residues 118–133 (RIPRLRPPEPHPRDRS) are compositionally biased toward basic and acidic residues. 3 disordered regions span residues 118 to 179 (RIPR…SPLS), 293 to 330 (RARA…SPPQ), and 399 to 420 (GDTA…ASST). Residues 148–158 (SQGNPTGSSPA) show a composition bias toward polar residues. The span at 307–326 (RAEDSSEGHEEEVLGGHGEK) shows a compositional bias: basic and acidic residues. Residues Ser311 and Ser312 each carry the phosphoserine modification. Residues 453–579 (SPLGQSQPTV…RQAHGISPMR (127 aa)) form a sufficient for dimerization of proICA512 region. N-linked (GlcNAc...) asparagine glycosylation is found at Asn510 and Asn528. A helical membrane pass occupies residues 580–604 (SLLLTLVALAGVAGLLVALAVALCM). A sufficient for dimerization of proICA512 region spans residues 605 to 736 (RHHSKQRDKE…PNTCATAQGE (132 aa)). Residues 605–983 (RHHSKQRDKE…VNAILKALPQ (379 aa)) are Cytoplasmic-facing. Residues 648–684 (RAEGQPEPSRVSSVSSQFSDAAQASPSSHSSTPSWCE) form a disordered region. Residues 652–681 (QPEPSRVSSVSSQFSDAAQASPSSHSSTPS) are compositionally biased toward low complexity. Residues 713–973 (LAKEWQALCA…EFALTAVAEE (261 aa)) enclose the Tyrosine-protein phosphatase domain. Lys758 is covalently cross-linked (Glycyl lysine isopeptide (Lys-Gly) (interchain with G-Cter in SUMO)).

This sequence belongs to the protein-tyrosine phosphatase family. Receptor class 8 subfamily. Homodimer; shown for the unprocessed protein (proICA512) in the endoplasmic reticulum and resolved during protein maturation as ICA512-TMF seems to be predominantly monomeric in secretory granules; however, ICA512-CCF interacts with ICA512-TMF disrupting the ICA512-TMF:SNTB2 complex. The isolated lumenal RESP18 homology domain has been shown to form disulfide-linked homooligomers. Interacts (via cytoplasmic domain) with phosphorylated SNTB2; this protects PTPRN against cleavage by CAPN1 to produce ICA512-CCF. Dephosphorylation of SNTB2 upon insulin stimulation disrupts the interaction and results in PTPRN cleavage. Interacts with SNX19. ICA512-CCF interacts with PIAS4; in the nucleus. Interacts with STAT5B (phosphorylated); down-regulated by ICA512-CCF sumoylation; ICA512-CCF prevents STAT5B dephosphorylation; ICA512-CCF mediates interaction of STAT5B with PIAS4. Interacts (via RESP18 homology domain) with insulin and proinsulin. Interacts with PTPRN2, PTPRA and PTPRE. Post-translationally, subject to proteolytic cleavage at multiple sites. Subject to cleavage on a pair of basic residues. Following exocytosis of secretory granules in pancreatic beta-cells ICA512-TMF located in the plasma-membrane is cleaved by mu-type calpain CPN1 to yield ICA512-CCF. N-glycosylated. In terms of processing, O-glycosylated. Post-translationally, sumoylated at two sites including Lys-758. Sumoylation decreases interaction with STAT5. As to expression, detected in pancreas islets. Detected in pancreas alpha, beta and delta cells, and in chromaffin cells in the adrenal medulla. Detected in amygdala, hypothalamus, autonomous nerve fibers and ganglia, especially at synaptic contacts. Detected in pituitary (at protein level). Detected in brain, specifically in cerebral cortex, diencephalon and brain stem.

The protein localises to the membrane. The protein resides in the cytoplasmic vesicle. It is found in the secretory vesicle membrane. Its subcellular location is the perikaryon. It localises to the cell projection. The protein localises to the axon. The protein resides in the synapse. It is found in the cell membrane. Its subcellular location is the endosome. It localises to the nucleus. Plays a role in vesicle-mediated secretory processes. Required for normal accumulation of secretory vesicles in hippocampus, pituitary and pancreatic islets. Required for the accumulation of normal levels of insulin-containing vesicles and preventing their degradation. Plays a role in insulin secretion in response to glucose stimuli. Required for normal accumulation of the neurotransmitters norepinephrine, dopamine and serotonin in the brain. In females, but not in males, required for normal accumulation and secretion of pituitary hormones, such as luteinizing hormone (LH) and follicle-stimulating hormone (FSH). Required to maintain normal levels of renin expression and renin release. Seems to lack intrinsic enzyme activity. In terms of biological role, ICA512-TMF regulates dynamics and exocytosis of insulin secretory granules (SGs); binding of ICA512-TMF to SNTB2/beta-2-syntrophin is proposed to restrain SGs mobility and exocytosis by tethering them to the actin cytoskeleton depending on UTRN; the function is inhibited by cytoplasmic ICA512-CFF dimerizing with ICA512-TMF and displacing SNTB2. Functionally, ICA512-CCF translocated to the nucleus promotes expression of insulin and other granule-related genes; the function implicates binding to and regulating activity of STAT5B probably by preventing its dephosphorylation and potentially by inducing its sumoylation by recruiting PIAS4. Enhances pancreatic beta-cell proliferation by converging with signaling by STAT5B and STAT3. ICA512-CCF located in the cytoplasm regulates dynamics and exocytosis of insulin secretory granules (SGs) by dimerizing with ICA512-TMF and displacing SNTB2 thus enhancing SGs mobility and exocytosis. This Rattus norvegicus (Rat) protein is Receptor-type tyrosine-protein phosphatase-like N (Ptprn).